The following is a 607-amino-acid chain: MLAGQHHVTDIESPLMVVLWRVAAGVFLPLVPTMAVFGNVLVIMSVFRERSLQTVTNMLIVSLAVSDFMVAIGVMSFGVYYEWNDFKWGLGSFFCHVYQALDVACSTASILNLLAISLDRYIAIGHPISYAQYGARGGRAMISITIVWGVSVAVALPLLLGVNPMEENDLQECELANPYFNMISSIFSFFIPCIAMIILYTIIFRRLRQRERARSLRQAQRSENDKISSALLGGAQIARQMGKHFKNRTDQILLEISFQTSSFPTMSESSEDASTISPMINSFNNFLPKKTPYPSTSIPAIPECGSMPNLTIIERPEAEKEKEISIMDLRDTVEMLDDKYSSAILTSFQTSRSFGEELEEILPFIDGSNSVKHSREQLHTTRSNTSTTRLLDVKPELRSISVPSIQDEKKLSQKSNDLPFSHQNGTHKQKLLPNPGILMKSKSTTLLKTNGYMDTDSLNRNSHKKSLADLLANDEFSFSDSMRVYKNRLFKSLSRATSGWNKPRPSRHMVKKATKQMRREHKATVTLAVVLAVFLFCWLPFFVLHLSNSICLIIDENSACVGFLPLYLATWLGYLNSSLNPLIYTVFDQRFRNAFRNILSCGIFKKR.

Over 1-23 (MLAGQHHVTDIESPLMVVLWRVA) the chain is Extracellular. Residues 24-44 (AGVFLPLVPTMAVFGNVLVIM) form a helical membrane-spanning segment. The Cytoplasmic portion of the chain corresponds to 45-58 (SVFRERSLQTVTNM). The chain crosses the membrane as a helical span at residues 59-79 (LIVSLAVSDFMVAIGVMSFGV). At 80–96 (YYEWNDFKWGLGSFFCH) the chain is on the extracellular side. Residues cysteine 95 and cysteine 173 are joined by a disulfide bond. The chain crosses the membrane as a helical span at residues 97-117 (VYQALDVACSTASILNLLAIS). Residues 118-141 (LDRYIAIGHPISYAQYGARGGRAM) lie on the Cytoplasmic side of the membrane. A helical transmembrane segment spans residues 142–162 (ISITIVWGVSVAVALPLLLGV). Over 163–182 (NPMEENDLQECELANPYFNM) the chain is Extracellular. A helical membrane pass occupies residues 183–203 (ISSIFSFFIPCIAMIILYTII). Over 204 to 523 (FRRLRQRERA…TKQMRREHKA (320 aa)) the chain is Cytoplasmic. Residues 402 to 435 (VPSIQDEKKLSQKSNDLPFSHQNGTHKQKLLPNP) are disordered. Positions 413–424 (QKSNDLPFSHQN) are enriched in polar residues. A helical membrane pass occupies residues 524–544 (TVTLAVVLAVFLFCWLPFFVL). The Extracellular portion of the chain corresponds to 545-558 (HLSNSICLIIDENS). Residues 559–579 (ACVGFLPLYLATWLGYLNSSL) form a helical membrane-spanning segment. The Cytoplasmic segment spans residues 580–607 (NPLIYTVFDQRFRNAFRNILSCGIFKKR).

The protein belongs to the G-protein coupled receptor 1 family. In terms of tissue distribution, expressed in the neurons of the head, ventral cord and tail with weak expression observed in body wall muscles and PVD neurons. In the ventral cord, expressed strongly in GABAergic neurons with weaker expression in cholinergic motor neurons. Expressed in cholinergic SIA neurons and octopaminergic RIC neurons. In males, expressed in the dorsal and ventral spicule protractor and retractor muscles, and the sensory post-cloacal sensilla B (PCB) neuron. Expressed in the head acetylcholine neurons. Expressed in the AVA, AVB, AVD and AVE command interneurons. Expressed in premotor interneurons.

It is found in the cell membrane. G-protein coupled receptor which binds to the neurotransmitter dopamine with high affinity leading to the activation of an associated G-protein and downstream signaling pathways. Couples to G-proteins to inhibit adenylate cyclase (AC) activity and cAMP production. Antagonizes the D1-like dopamine receptor dop-1 to negatively regulate the rate of locomotion. Negatively regulates locomotion through the activation of goa-1 subunit proteins which inactivates the unc-77/nca-1 and nca-2 ion-channels in the command interneurons. Inhibits early-stage swimming by modulating the unc-77/nca-1 and nca-2 ion channels of premotor interneurons. In GABAergic, RIC, and SIA neurons, antagonizes the function of dop-1 to play a role in behavioral plasticity and regulate the decision-making process when conflicting alternatives are present. Antagonizes octopamine signaling in response to food by promoting the dopamine-mediated suppression of crh-1/CREB1 transcription factor activation in cholinergic SIA neurons. This is most likely in association with the G(o)-alpha G-protein subunit goa-1. Promotes male mating behavior by antagonizing acetylcholine signaling to control the protrusion of copulatory spicules from the tail of males during hermaphrodite vulval location. Under mitochondria stress, plays a role in bacterial preference, resulting in learned avoidance behavior. The chain is Dopamine receptor 3 from Caenorhabditis elegans.